A 234-amino-acid chain; its full sequence is Cytochrome b (234 aa).

4 helical membrane-spanning segments follow: residues 33-53 (FGSL…FLAM), 77-98 (WLIR…YMHV), 113-133 (WNIG…GYVL), and 178-198 (FFAF…IHLL). The heme b site is built by His-83 and His-97. His-182 and His-196 together coordinate heme b. His-201 lines the a ubiquinone pocket. Residues 226-234 (IKDLLGFLV) traverse the membrane as a helical segment.

Belongs to the cytochrome b family. In terms of assembly, the cytochrome bc1 complex contains 11 subunits: 3 respiratory subunits (MT-CYB, CYC1 and UQCRFS1), 2 core proteins (UQCRC1 and UQCRC2) and 6 low-molecular weight proteins (UQCRH/QCR6, UQCRB/QCR7, UQCRQ/QCR8, UQCR10/QCR9, UQCR11/QCR10 and a cleavage product of UQCRFS1). This cytochrome bc1 complex then forms a dimer. Requires heme b as cofactor.

The protein resides in the mitochondrion inner membrane. Functionally, component of the ubiquinol-cytochrome c reductase complex (complex III or cytochrome b-c1 complex) that is part of the mitochondrial respiratory chain. The b-c1 complex mediates electron transfer from ubiquinol to cytochrome c. Contributes to the generation of a proton gradient across the mitochondrial membrane that is then used for ATP synthesis. In Lepus arcticus (Arctic hare), this protein is Cytochrome b (MT-CYB).